A 106-amino-acid polypeptide reads, in one-letter code: Gas vesicle protein J (106 aa).

It belongs to the gas vesicle GvpA family.

Its subcellular location is the gas vesicle. Its function is as follows. A minor component of the gas vesicle, might be involved in nucleating gas vesicle formation. Gas vesicles are hollow, gas filled proteinaceous nanostructures found in some microorganisms. It is not clear what function gas vesicles perform in soil bacteria. This chain is Gas vesicle protein J, found in Streptomyces sp. (strain CB03234).